Consider the following 101-residue polypeptide: Urease subunit beta (101 aa).

Belongs to the urease beta subunit family. As to quaternary structure, heterotrimer of UreA (gamma), UreB (beta) and UreC (alpha) subunits. Three heterotrimers associate to form the active enzyme.

It localises to the cytoplasm. The enzyme catalyses urea + 2 H2O + H(+) = hydrogencarbonate + 2 NH4(+). The protein operates within nitrogen metabolism; urea degradation; CO(2) and NH(3) from urea (urease route): step 1/1. In Polaromonas naphthalenivorans (strain CJ2), this protein is Urease subunit beta.